Reading from the N-terminus, the 461-residue chain is Asparagine--tRNA ligase (461 aa).

This sequence belongs to the class-II aminoacyl-tRNA synthetase family. As to quaternary structure, homodimer.

It localises to the cytoplasm. It carries out the reaction tRNA(Asn) + L-asparagine + ATP = L-asparaginyl-tRNA(Asn) + AMP + diphosphate + H(+). In Nitratidesulfovibrio vulgaris (strain ATCC 29579 / DSM 644 / CCUG 34227 / NCIMB 8303 / VKM B-1760 / Hildenborough) (Desulfovibrio vulgaris), this protein is Asparagine--tRNA ligase.